Reading from the N-terminus, the 84-residue chain is Small ribosomal subunit protein bS16 (84 aa).

The protein belongs to the bacterial ribosomal protein bS16 family.

This is Small ribosomal subunit protein bS16 from Delftia acidovorans (strain DSM 14801 / SPH-1).